The sequence spans 312 residues: Taste receptor type 2 member 135 (312 aa).

The Extracellular portion of the chain corresponds to 1 to 19 (MSTGHTVLGCQTTDKTVVT). The helical transmembrane segment at 20–40 (LFIILVLLCLVAVVGNGFIII) threads the bilayer. Topologically, residues 41-66 (ALGMKWLLRRTLSAHNKLLISLAASR) are cytoplasmic. Residues 67–87 (FCLQCVVIGKNIYVFLNPTSF) traverse the membrane as a helical segment. The Extracellular portion of the chain corresponds to 88 to 97 (PYNPVIQLLN). A helical transmembrane segment spans residues 98–118 (LMWDFLTAATIWLCSLLGFFY). Topologically, residues 119-140 (CVKIATLTHPVFVWLKYRLPGW) are cytoplasmic. The chain crosses the membrane as a helical span at residues 141–161 (VPWMLLSAVGMSSLTSILCFI). The Extracellular segment spans residues 162-198 (GNYMIYQNHAKSGHQPWNVTGNSLRHSLEKFYFFSIK). A glycan (N-linked (GlcNAc...) asparagine) is linked at Asn179. Residues 199 to 219 (IIMWTIPTVVFSIFMSLLLVS) traverse the membrane as a helical segment. The Cytoplasmic segment spans residues 220 to 244 (LVRHMKKTFLALSELRDVWAQAHFK). A helical membrane pass occupies residues 245–265 (ALLPLLSFIVLFISCFLTLVL). Residues 266 to 277 (SSASNTPYQEFR) lie on the Extracellular side of the membrane. The chain crosses the membrane as a helical span at residues 278–298 (YWMWQVVIHLCTVIHPIVILF). Over 299 to 312 (SNPVLRVVIKRGCC) the chain is Cytoplasmic.

This sequence belongs to the G-protein coupled receptor T2R family.

The protein localises to the membrane. Its function is as follows. Putative taste receptor which may play a role in the perception of bitterness. This Mus musculus (Mouse) protein is Taste receptor type 2 member 135 (Tas2r135).